We begin with the raw amino-acid sequence, 211 residues long: Protein-L-isoaspartate O-methyltransferase (211 aa).

S60 is a catalytic residue.

This sequence belongs to the methyltransferase superfamily. L-isoaspartyl/D-aspartyl protein methyltransferase family.

Its subcellular location is the cytoplasm. The catalysed reaction is [protein]-L-isoaspartate + S-adenosyl-L-methionine = [protein]-L-isoaspartate alpha-methyl ester + S-adenosyl-L-homocysteine. Its function is as follows. Catalyzes the methyl esterification of L-isoaspartyl residues in peptides and proteins that result from spontaneous decomposition of normal L-aspartyl and L-asparaginyl residues. It plays a role in the repair and/or degradation of damaged proteins. This Pseudomonas paraeruginosa (strain DSM 24068 / PA7) (Pseudomonas aeruginosa (strain PA7)) protein is Protein-L-isoaspartate O-methyltransferase.